The primary structure comprises 263 residues: Imidazole glycerol phosphate synthase subunit HisF (263 aa).

Active-site residues include Asp-11 and Asp-130.

It belongs to the HisA/HisF family. As to quaternary structure, heterodimer of HisH and HisF.

It is found in the cytoplasm. It carries out the reaction 5-[(5-phospho-1-deoxy-D-ribulos-1-ylimino)methylamino]-1-(5-phospho-beta-D-ribosyl)imidazole-4-carboxamide + L-glutamine = D-erythro-1-(imidazol-4-yl)glycerol 3-phosphate + 5-amino-1-(5-phospho-beta-D-ribosyl)imidazole-4-carboxamide + L-glutamate + H(+). It participates in amino-acid biosynthesis; L-histidine biosynthesis; L-histidine from 5-phospho-alpha-D-ribose 1-diphosphate: step 5/9. Its function is as follows. IGPS catalyzes the conversion of PRFAR and glutamine to IGP, AICAR and glutamate. The HisF subunit catalyzes the cyclization activity that produces IGP and AICAR from PRFAR using the ammonia provided by the HisH subunit. This chain is Imidazole glycerol phosphate synthase subunit HisF, found in Synechococcus sp. (strain CC9311).